The chain runs to 198 residues: Nucleoid occlusion factor SlmA (198 aa).

The 61-residue stretch at 10 to 70 (NRREEILQSL…SLIEFIEDSL (61 aa)) folds into the HTH tetR-type domain. Positions 33–52 (TTAKLAASVGVSEAALYRHF) form a DNA-binding region, H-T-H motif. A coiled-coil region spans residues 117-144 (EQDRLQGRINQLFERIEAQLRQVLREKR).

It belongs to the nucleoid occlusion factor SlmA family. As to quaternary structure, homodimer. Interacts with FtsZ.

The protein localises to the cytoplasm. It is found in the nucleoid. Its function is as follows. Required for nucleoid occlusion (NO) phenomenon, which prevents Z-ring formation and cell division over the nucleoid. Acts as a DNA-associated cell division inhibitor that binds simultaneously chromosomal DNA and FtsZ, and disrupts the assembly of FtsZ polymers. SlmA-DNA-binding sequences (SBS) are dispersed on non-Ter regions of the chromosome, preventing FtsZ polymerization at these regions. The polypeptide is Nucleoid occlusion factor SlmA (Escherichia coli O45:K1 (strain S88 / ExPEC)).